Here is a 471-residue protein sequence, read N- to C-terminus: Elongation factor 1-alpha (471 aa).

Residues 10–239 enclose the tr-type G domain; that stretch reads KPRLNACFIG…EALNYQDVPE (230 aa). The G1 stretch occupies residues 19–26; sequence GHVDSGKS. A GTP-binding site is contributed by 19 to 26; that stretch reads GHVDSGKS. A G2 region spans residues 75–79; the sequence is GITIT. The interval 96 to 99 is G3; that stretch reads DCPG. GTP contacts are provided by residues 96–100 and 156–159; these read DCPGH and NKMD. The interval 156–159 is G4; sequence NKMD. The G5 stretch occupies residues 196-198; that stretch reads SAF.

The protein belongs to the TRAFAC class translation factor GTPase superfamily. Classic translation factor GTPase family. EF-Tu/EF-1A subfamily. In terms of assembly, component of the eukaryotic elongation factor 1 complex (eEF1).

It is found in the cytoplasm. It functions in the pathway protein biosynthesis; polypeptide chain elongation. Its function is as follows. GTP-binding component of the eukaryotic elongation factor 1 complex (eEF1). In its active GTP-bound form, binds to and delivers aminoacyl-tRNA to the A-site of ribosomes during protein biosynthesis. In the presence of a correct codon-anticodon match between the aminoacyl-tRNA and the A-site codon of the ribosome-bound mRNA, the ribosome acts as a GTPase activator and the GTP is hydrolyzed. The inactive GDP-bound form leaves the ribosome and must be recycled by its guanine nucleotide exchange factor (GEF) (eEF1B subcomplex) before binding another molecule of aminoacyl-tRNA. Required for nuclear export of aminoacyl-tRNAs. May also be involved in translational quality control by targeting cotranslationally damaged proteins to the proteasome. The protein is Elongation factor 1-alpha (TEF1) of Encephalitozoon cuniculi (strain GB-M1) (Microsporidian parasite).